The primary structure comprises 476 residues: MPMSLRLHNNLTRRVEPFAPLDPSSPTLYVCGPTVYNYAHIGNARGPVVFDVLAALLRRRYGALRYARNITDVDDKINAAAQAQGVPISTITDRFAAIYRQDMAALGVVPPDIEPEATAHIPQIVAMIEQLIANGHAYAAEGHVLFSVSSFDGYGKLSRRDPDEMLAGARVDVAPYKRDPGDFVLWKPSSADLPGWESPWGRGRPGWHIECSAMAAAHLGPTIDIHAGGVDLQFPHHENEIAQSECAHGGATFARFWLHNGMLNFSGAKMSKSLGNIETVHELIARHPPEALRYALLSAHYRQPLDWSDGLIEQAKNTLDRLYGTLRDLAALQADSGNDVAPSRTIPVEVESALEDDLNTPLALSVIASIASEARALRNELVHGGEPSTRMSDLHAVHAKLLGAGLALGLLQQDPAAWFSRGTDAGDDARITALVEERSTAKKAKDFARADAIRKQLAEEGIVLEDTPQGVRWKRA.

Position 31 (cysteine 31) interacts with Zn(2+). Residues proline 33–asparagine 43 carry the 'HIGH' region motif. Residues cysteine 211, histidine 236, and glutamate 240 each coordinate Zn(2+). A 'KMSKS' region motif is present at residues lysine 269–serine 273. Lysine 272 is a binding site for ATP.

The protein belongs to the class-I aminoacyl-tRNA synthetase family. In terms of assembly, monomer. Requires Zn(2+) as cofactor.

The protein localises to the cytoplasm. The catalysed reaction is tRNA(Cys) + L-cysteine + ATP = L-cysteinyl-tRNA(Cys) + AMP + diphosphate. In Xanthomonas axonopodis pv. citri (strain 306), this protein is Cysteine--tRNA ligase.